We begin with the raw amino-acid sequence, 278 residues long: Putative phosphoenolpyruvate synthase regulatory protein (278 aa).

158 to 165 (GVSRSGKT) provides a ligand contact to ADP.

The protein belongs to the pyruvate, phosphate/water dikinase regulatory protein family. PSRP subfamily.

The catalysed reaction is [pyruvate, water dikinase] + ADP = [pyruvate, water dikinase]-phosphate + AMP + H(+). The enzyme catalyses [pyruvate, water dikinase]-phosphate + phosphate + H(+) = [pyruvate, water dikinase] + diphosphate. Its function is as follows. Bifunctional serine/threonine kinase and phosphorylase involved in the regulation of the phosphoenolpyruvate synthase (PEPS) by catalyzing its phosphorylation/dephosphorylation. The chain is Putative phosphoenolpyruvate synthase regulatory protein from Acinetobacter baumannii (strain AYE).